The chain runs to 232 residues: Clarin-1 (232 aa).

Residues 8–28 (IIFCMAGVFSFACALGVVTAL) form a helical membrane-spanning segment. The N-linked (GlcNAc...) asparagine glycan is linked to Asn48. Transmembrane regions (helical) follow at residues 101–121 (VILFSAILIVLTMVGTAFFMY), 135–155 (LGLYLLSFISGSCGCLVMILF), and 186–206 (TTSFWVIFFCFFVHFLNGLLI).

Belongs to the clarin family. In terms of tissue distribution, widely expressed. Found in the retina.

Its subcellular location is the cell membrane. Its function is as follows. May have a role in the excitatory ribbon synapse junctions between hair cells and cochlear ganglion cells and presumably also in analogous synapses within the retina. This Homo sapiens (Human) protein is Clarin-1 (CLRN1).